The following is a 436-amino-acid chain: Transcriptional regulator VdtR (436 aa).

A DNA-binding region (zn(2)-C6 fungal-type) is located at residues 17 to 44; sequence CDRCSANKVKCTQEKPECERCRLLSLPC. Disordered regions lie at residues 51–147 and 173–192; these read RIGK…HDKG and TARE…EYSD. The segment covering 125 to 141 has biased composition (polar residues); that stretch reads SHNSNRPTNMASTNQDQ. A compositionally biased stretch (basic and acidic residues) spans 174-192; that stretch reads AREDQKQHPELRSEEEYSD.

Its subcellular location is the nucleus. Transcription factor that regulates expression of the viriditoxin biosynthesis cluster and viriditoxin synthesis. The sequence is that of Transcriptional regulator VdtR from Byssochlamys spectabilis (Paecilomyces variotii).